A 222-amino-acid chain; its full sequence is Collectrin (222 aa).

Residues 1–14 (MLWALFFLVTTIHA) form the signal peptide. Over 15–141 (ELCRPDAENA…LAPPMDPSVP (127 aa)) the chain is Extracellular. A Collectrin-like domain is found at 21-222 (AENAFKVRLS…LTEDERLTPL (202 aa)). Residues N76 and N93 are each glycosylated (N-linked (GlcNAc...) asparagine). The helical transmembrane segment at 142-162 (VWIIVFGVIFCIVTVAIALLV) threads the bilayer. Residues 163-222 (LSGIRQRRRNKKGPPGVEDAEDKCENIITIENGIPCDPLDMKGGHINDGFLTEDERLTPL) are Cytoplasmic-facing. Phosphothreonine occurs at positions 214 and 220.

This sequence belongs to the CLTRN family. In terms of assembly, monomer. Homodimer; dimerization prevents CLTRN cleavage by BACE2. Interacts with SLC6A18; this interaction regulates the trafficking of SLC6A18 to the cell membrane and its amino acid transporter activity. Interacts with SLC6A19; this interaction regulates the trafficking of SLC6A19 to the cell membrane and its amino acid transporter activity. Interacts with SNAPIN. Post-translationally, glycosylated. Glycosylation is required for plasma membrane localization and for its cleavage by BACE2. In terms of processing, proteolytically processed in pancreatic beta cells by BACE2 leading to the generation and extracellular release of soluble CLTRN, and a corresponding cell-associated C-terminal fragment which is later cleaved by gamma-secretase. This shedding process inactivates CLTRN. Three cleavage sites have been identified for BACE2, two clustered sites after Phe-116 and Leu-118 and a more membrane proximal site at Phe-125; the preferred BACE2 cleavage site seems to be between Phe-125 and Leu-126, Phe-116 and Leu-118 act as alternative sites. In terms of tissue distribution, kidney; collecting ducts. Pancreas; beta cells of islets.

Its subcellular location is the cell membrane. Plays an important role in amino acid transport by acting as binding partner of amino acid transporters SLC6A18 and SLC6A19, regulating their trafficking on the cell surface and their activity. May also play a role in trafficking of amino acid transporters SLC3A1 and SLC7A9 to the renal cortical cell membrane. Regulator of SNARE complex function. Stimulator of beta cell replication. This is Collectrin from Rattus norvegicus (Rat).